Reading from the N-terminus, the 157-residue chain is Transcriptional repressor NrdR (157 aa).

Residues 3 to 34 (CPFCSATDTKVIDSRLVADGHQVRRRRECLLC) fold into a zinc finger. In terms of domain architecture, ATP-cone spans 49–139 (PRVVKQDGSR…VYRAFEDVSE (91 aa)).

Belongs to the NrdR family. Zn(2+) serves as cofactor.

Functionally, negatively regulates transcription of bacterial ribonucleotide reductase nrd genes and operons by binding to NrdR-boxes. This chain is Transcriptional repressor NrdR, found in Shewanella loihica (strain ATCC BAA-1088 / PV-4).